The chain runs to 86 residues: BolA-like protein 2 (86 aa).

Methionine 1 bears the N-acetylmethionine mark.

This sequence belongs to the BolA/IbaG family. In terms of assembly, interacts with GLRX3; forms a heterotrimeric complex composed by two BOLA2 molecules and one GLRX3 molecule; linked by [2Fe-2S] clusters.

The protein localises to the cytoplasm. Its subcellular location is the nucleus. Its function is as follows. Acts as a cytosolic iron-sulfur (Fe-S) cluster assembly factor that facilitates [2Fe-2S] cluster insertion into a subset of cytosolic proteins. Acts together with the monothiol glutaredoxin GLRX3. This is BolA-like protein 2 (Bola2) from Mus musculus (Mouse).